The following is a 321-amino-acid chain: Lipoyl synthase (321 aa).

7 residues coordinate [4Fe-4S] cluster: Cys-68, Cys-73, Cys-79, Cys-94, Cys-98, Cys-101, and Ser-308. In terms of domain architecture, Radical SAM core spans Phe-80–Thr-297.

The protein belongs to the radical SAM superfamily. Lipoyl synthase family. It depends on [4Fe-4S] cluster as a cofactor.

It localises to the cytoplasm. The enzyme catalyses [[Fe-S] cluster scaffold protein carrying a second [4Fe-4S](2+) cluster] + N(6)-octanoyl-L-lysyl-[protein] + 2 oxidized [2Fe-2S]-[ferredoxin] + 2 S-adenosyl-L-methionine + 4 H(+) = [[Fe-S] cluster scaffold protein] + N(6)-[(R)-dihydrolipoyl]-L-lysyl-[protein] + 4 Fe(3+) + 2 hydrogen sulfide + 2 5'-deoxyadenosine + 2 L-methionine + 2 reduced [2Fe-2S]-[ferredoxin]. It functions in the pathway protein modification; protein lipoylation via endogenous pathway; protein N(6)-(lipoyl)lysine from octanoyl-[acyl-carrier-protein]: step 2/2. In terms of biological role, catalyzes the radical-mediated insertion of two sulfur atoms into the C-6 and C-8 positions of the octanoyl moiety bound to the lipoyl domains of lipoate-dependent enzymes, thereby converting the octanoylated domains into lipoylated derivatives. The chain is Lipoyl synthase from Yersinia pseudotuberculosis serotype O:1b (strain IP 31758).